Here is a 637-residue protein sequence, read N- to C-terminus: tRNA uridine 5-carboxymethylaminomethyl modification enzyme MnmG (637 aa).

18–23 (GAGHAG) provides a ligand contact to FAD. 281 to 295 (GPRYCPSIEDKIVRF) contributes to the NAD(+) binding site.

The protein belongs to the MnmG family. As to quaternary structure, homodimer. Heterotetramer of two MnmE and two MnmG subunits. Requires FAD as cofactor.

It localises to the cytoplasm. Functionally, NAD-binding protein involved in the addition of a carboxymethylaminomethyl (cmnm) group at the wobble position (U34) of certain tRNAs, forming tRNA-cmnm(5)s(2)U34. This Ligilactobacillus salivarius (strain UCC118) (Lactobacillus salivarius) protein is tRNA uridine 5-carboxymethylaminomethyl modification enzyme MnmG.